The sequence spans 371 residues: Meiotic drive suppressor wtf18 (371 aa).

Helical transmembrane passes span 86–106 (FLLR…TAWV), 120–140 (AFSV…FCFF), 153–173 (VTVI…AQCV), 197–217 (DLVV…FGCV), 233–253 (CSIS…IWTL), 257–277 (LFGL…TKGL), 287–307 (ATGY…LFFY), and 321–341 (FIGN…GGIG).

The protein belongs to the WTF family. In terms of assembly, homomer. Interacts with other proteins that exhibit high sequence similarity.

It is found in the spore membrane. It localises to the vacuole membrane. Its function is as follows. Acts as a suppressor component of the dual wtf meiotic drive system, and can suppress but not confer meiotic drive by compatible poisons. Wtf meiotic drive systems promote unequal transmission of alleles from the parental zygote to progeny spores by encoding a poison and an antidote from the same locus; the poison is trans-acting and forms toxic aggregates in all spores within an ascus, wherease the antidote is spore-specific and targets aggregates for degradation by the vacuole. Meiotic drive by wtf systems therefore lead to poisoning of all progeny that do not inherit the dual poison/antidote allele, or express a compatible antidote. This chain is Meiotic drive suppressor wtf18, found in Schizosaccharomyces kambucha (Fission yeast).